The following is a 174-amino-acid chain: Male-enhanced antigen 1 (174 aa).

Disordered stretches follow at residues 1–83 (MAAV…DGAA) and 95–123 (HLPD…IPMD). Acidic residues-rich tracts occupy residues 38-48 (SSEEPEEEQEE), 65-82 (PEQE…EDGA), and 101-110 (LESEDEDEEG). A Phosphoserine modification is found at Ser103.

Highly expressed in testis. Transcripts can be found in primary and secondary spermatocytes, and spermatids, but the protein itself is only detected in spermatids. No expression in Leydig cells, spermatogonia, or sperm. Very weak expression in the heart, kidney, spleen, thymus and ovary.

May play an important role in spermatogenesis and/or testis development. This is Male-enhanced antigen 1 (Mea1) from Mus musculus (Mouse).